The following is a 90-amino-acid chain: uncharacterized protein (90 aa).

This is an uncharacterized protein from Escherichia coli O157:H7.